A 355-amino-acid polypeptide reads, in one-letter code: Phosphoribosylformylglycinamidine cyclo-ligase (355 aa).

The protein belongs to the AIR synthase family.

Its subcellular location is the cytoplasm. The catalysed reaction is 2-formamido-N(1)-(5-O-phospho-beta-D-ribosyl)acetamidine + ATP = 5-amino-1-(5-phospho-beta-D-ribosyl)imidazole + ADP + phosphate + H(+). It functions in the pathway purine metabolism; IMP biosynthesis via de novo pathway; 5-amino-1-(5-phospho-D-ribosyl)imidazole from N(2)-formyl-N(1)-(5-phospho-D-ribosyl)glycinamide: step 2/2. The polypeptide is Phosphoribosylformylglycinamidine cyclo-ligase (Paraburkholderia phymatum (strain DSM 17167 / CIP 108236 / LMG 21445 / STM815) (Burkholderia phymatum)).